The sequence spans 496 residues: Probable cytosol aminopeptidase (496 aa).

Mn(2+) contacts are provided by Lys262 and Asp267. Residue Lys274 is part of the active site. Asp285, Asp344, and Glu346 together coordinate Mn(2+). Arg348 is a catalytic residue.

This sequence belongs to the peptidase M17 family. Mn(2+) serves as cofactor.

Its subcellular location is the cytoplasm. The catalysed reaction is Release of an N-terminal amino acid, Xaa-|-Yaa-, in which Xaa is preferably Leu, but may be other amino acids including Pro although not Arg or Lys, and Yaa may be Pro. Amino acid amides and methyl esters are also readily hydrolyzed, but rates on arylamides are exceedingly low.. It catalyses the reaction Release of an N-terminal amino acid, preferentially leucine, but not glutamic or aspartic acids.. In terms of biological role, presumably involved in the processing and regular turnover of intracellular proteins. Catalyzes the removal of unsubstituted N-terminal amino acids from various peptides. The polypeptide is Probable cytosol aminopeptidase (Rhizobium leguminosarum bv. trifolii (strain WSM2304)).